The chain runs to 177 residues: Large ribosomal subunit protein uL6 (177 aa).

The protein belongs to the universal ribosomal protein uL6 family. As to quaternary structure, part of the 50S ribosomal subunit.

This protein binds to the 23S rRNA, and is important in its secondary structure. It is located near the subunit interface in the base of the L7/L12 stalk, and near the tRNA binding site of the peptidyltransferase center. This chain is Large ribosomal subunit protein uL6, found in Sinorhizobium fredii (strain NBRC 101917 / NGR234).